The chain runs to 168 residues: Shikimate kinase (168 aa).

12–17 (GAGKST) lines the ATP pocket. A Mg(2+)-binding site is contributed by Ser-16. Substrate contacts are provided by Asp-34, Arg-58, and Gly-80. Position 117 (Arg-117) interacts with ATP. Arg-136 contributes to the substrate binding site. ATP is bound at residue Arg-153.

The protein belongs to the shikimate kinase family. Monomer. The cofactor is Mg(2+).

It localises to the cytoplasm. It catalyses the reaction shikimate + ATP = 3-phosphoshikimate + ADP + H(+). It functions in the pathway metabolic intermediate biosynthesis; chorismate biosynthesis; chorismate from D-erythrose 4-phosphate and phosphoenolpyruvate: step 5/7. Its function is as follows. Catalyzes the specific phosphorylation of the 3-hydroxyl group of shikimic acid using ATP as a cosubstrate. In Rhodococcus jostii (strain RHA1), this protein is Shikimate kinase.